Consider the following 394-residue polypeptide: Elongation factor Tu 2 (394 aa).

The tr-type G domain maps to K10–E204. Residues G19–T26 are G1. G19 to T26 is a GTP binding site. T26 contributes to the Mg(2+) binding site. The interval G60 to N64 is G2. The segment at D81 to G84 is G3. Residues D81–H85 and N136–D139 each bind GTP. Residues N136–D139 form a G4 region. Residues S174–L176 form a G5 region.

Belongs to the TRAFAC class translation factor GTPase superfamily. Classic translation factor GTPase family. EF-Tu/EF-1A subfamily. As to quaternary structure, monomer.

Its subcellular location is the cytoplasm. It catalyses the reaction GTP + H2O = GDP + phosphate + H(+). In terms of biological role, GTP hydrolase that promotes the GTP-dependent binding of aminoacyl-tRNA to the A-site of ribosomes during protein biosynthesis. The sequence is that of Elongation factor Tu 2 from Shigella flexneri serotype 5b (strain 8401).